A 316-amino-acid chain; its full sequence is MGERKGQNKYYPPDYDPKKGGLNKFQGTHALRERARKIHLGIIIIRFEMPYNIWCDGCKNHIGMGVRYNAEKTKVGMYYTTPVFKFRMKCHLCDNHFEIQTDPGNLDYVILSGARRQENRWDPLQNEQVVPETKEVQKRLFDDAMYKLEHQAKDAKAGADARPVLQKLVERNMSVWDDSYMANSRLRAEFRQQKKEINGQQELDRQLLAKSSLDIALLPETTQDREMAALMKLQTKSALERESEQRLELLMRPALPGATVTTFGGLKRQKVLNTQLQVQDLGIRRKKLEETTSSATNEKPISLVGDYSSSDNDSNG.

Residues 182-203 (ANSRLRAEFRQQKKEINGQQEL) adopt a coiled-coil conformation. Residues 287 to 316 (KLEETTSSATNEKPISLVGDYSSSDNDSNG) are disordered.

It belongs to the CWC16 family.

The protein is Coiled-coil domain-containing protein 130 homolog of Drosophila melanogaster (Fruit fly).